Here is a 329-residue protein sequence, read N- to C-terminus: Sulfate/thiosulfate import ATP-binding protein CysA (329 aa).

The region spanning 3–237 (IEIRNVSKNF…PASDFVYHFL (235 aa)) is the ABC transporter domain. 35 to 42 (GPSGCGKT) contacts ATP.

Belongs to the ABC transporter superfamily. Sulfate/tungstate importer (TC 3.A.1.6) family. The complex is composed of two ATP-binding proteins (CysA), two transmembrane proteins (CysT and CysW) and a solute-binding protein (CysP).

The protein resides in the cell inner membrane. It carries out the reaction sulfate(out) + ATP + H2O = sulfate(in) + ADP + phosphate + H(+). It catalyses the reaction thiosulfate(out) + ATP + H2O = thiosulfate(in) + ADP + phosphate + H(+). Part of the ABC transporter complex CysAWTP involved in sulfate/thiosulfate import. Responsible for energy coupling to the transport system. The sequence is that of Sulfate/thiosulfate import ATP-binding protein CysA from Pseudomonas aeruginosa (strain ATCC 15692 / DSM 22644 / CIP 104116 / JCM 14847 / LMG 12228 / 1C / PRS 101 / PAO1).